We begin with the raw amino-acid sequence, 296 residues long: ATP synthase gamma chain (296 aa).

It belongs to the ATPase gamma chain family. F-type ATPases have 2 components, CF(1) - the catalytic core - and CF(0) - the membrane proton channel. CF(1) has five subunits: alpha(3), beta(3), gamma(1), delta(1), epsilon(1). CF(0) has three main subunits: a, b and c.

The protein resides in the cell inner membrane. Its function is as follows. Produces ATP from ADP in the presence of a proton gradient across the membrane. The gamma chain is believed to be important in regulating ATPase activity and the flow of protons through the CF(0) complex. In Gluconobacter oxydans (strain 621H) (Gluconobacter suboxydans), this protein is ATP synthase gamma chain.